The chain runs to 463 residues: Chaperone SurA (463 aa).

The first 25 residues, Met-1–Ala-25, serve as a signal peptide directing secretion. PpiC domains follow at residues Gly-174–Glu-276 and Val-289–Gly-388. 2 disordered regions span residues Ala-329–Gly-348 and Gly-434–Arg-463. Positions Asn-439 to Ala-452 are enriched in low complexity. The span at Leu-453 to Arg-463 shows a compositional bias: pro residues.

The protein localises to the periplasm. It catalyses the reaction [protein]-peptidylproline (omega=180) = [protein]-peptidylproline (omega=0). Functionally, chaperone involved in the correct folding and assembly of outer membrane proteins. Recognizes specific patterns of aromatic residues and the orientation of their side chains, which are found more frequently in integral outer membrane proteins. May act in both early periplasmic and late outer membrane-associated steps of protein maturation. The sequence is that of Chaperone SurA from Xanthomonas oryzae pv. oryzae (strain KACC10331 / KXO85).